We begin with the raw amino-acid sequence, 147 residues long: Small ribosomal subunit protein uS12 (147 aa).

This sequence belongs to the universal ribosomal protein uS12 family. Part of the 30S ribosomal subunit.

Its function is as follows. With S4 and S5 plays an important role in translational accuracy. Located at the interface of the 30S and 50S subunits. In Methanococcus aeolicus (strain ATCC BAA-1280 / DSM 17508 / OCM 812 / Nankai-3), this protein is Small ribosomal subunit protein uS12.